The sequence spans 721 residues: Catalase-peroxidase 1 (721 aa).

The tryptophyl-tyrosyl-methioninium (Trp-Tyr) (with M-252) cross-link spans 98–226 (WHAAGTYRIA…LAAVMMGLIY (129 aa)). His-99 acts as the Proton acceptor in catalysis. A cross-link (tryptophyl-tyrosyl-methioninium (Tyr-Met) (with W-98)) is located at residues 226–252 (YVNPEGVDGQPDPLKTAHDVRVTFARM). His-267 is a heme b binding site.

It belongs to the peroxidase family. Peroxidase/catalase subfamily. As to quaternary structure, homodimer or homotetramer. Requires heme b as cofactor. Formation of the three residue Trp-Tyr-Met cross-link is important for the catalase, but not the peroxidase activity of the enzyme.

It catalyses the reaction H2O2 + AH2 = A + 2 H2O. The catalysed reaction is 2 H2O2 = O2 + 2 H2O. Functionally, bifunctional enzyme with both catalase and broad-spectrum peroxidase activity. The polypeptide is Catalase-peroxidase 1 (Vibrio parahaemolyticus serotype O3:K6 (strain RIMD 2210633)).